Reading from the N-terminus, the 92-residue chain is Small ribosomal subunit protein uS19 (92 aa).

This sequence belongs to the universal ribosomal protein uS19 family.

Its function is as follows. Protein S19 forms a complex with S13 that binds strongly to the 16S ribosomal RNA. The sequence is that of Small ribosomal subunit protein uS19 from Anoxybacillus flavithermus (strain DSM 21510 / WK1).